A 168-amino-acid chain; its full sequence is Disulfide bond formation protein B 2 (168 aa).

At 1 to 14 (MSAPIGATRAERWT) the chain is on the cytoplasmic side. A helical transmembrane segment spans residues 15–31 (LLAIGVASFELVAGALW). The Periplasmic segment spans residues 32-49 (IQLAWQEDPCPLCIIQRY). Cys41 and Cys44 are disulfide-bonded. The helical transmembrane segment at 50–64 (LFLLIALFTFVAAAG) threads the bilayer. Residues 65–69 (GRRVA) lie on the Cytoplasmic side of the membrane. A helical membrane pass occupies residues 70–87 (LLRVLSLTTALAGAAVAV). The Periplasmic portion of the chain corresponds to 88 to 142 (RHIYVQAHPGFSCGFDALQPVIDSLPPAHWLPPVFKVGGLCETLYPPILGLSLPM). Cys100 and Cys128 are disulfide-bonded. Residues 143–161 (WALVGFSAIAVALGWRIRA) traverse the membrane as a helical segment. Topologically, residues 162-168 (QAVIRTA) are cytoplasmic.

It belongs to the DsbB family.

Its subcellular location is the cell inner membrane. Functionally, required for disulfide bond formation in some periplasmic proteins. Acts by oxidizing the DsbA protein. The polypeptide is Disulfide bond formation protein B 2 (Burkholderia lata (strain ATCC 17760 / DSM 23089 / LMG 22485 / NCIMB 9086 / R18194 / 383)).